We begin with the raw amino-acid sequence, 613 residues long: Putative adenosylhomocysteinase 3 (613 aa).

2 stretches are compositionally biased toward low complexity: residues 1 to 14 (MSVQ…AAKV) and 35 to 44 (AAAVGAMVPP). Residues 1 to 186 (MSVQVVSAAA…KQQKNSKGSS (186 aa)) are disordered. Serine 2 is modified (N-acetylserine). Positions 2–111 (SVQVVSAAAA…DGGEALVSPD (110 aa)) are LISN domain, inhibits interaction with ITPR1. Over residues 52–68 (APAPAPAAERPPAPGPG) the composition is skewed to pro residues. Over residues 70–80 (GPTAALSPAAG) the composition is skewed to low complexity. Residue serine 109 is modified to Phosphoserine. Over residues 137–146 (RPTKIGRRSL) the composition is skewed to basic residues. Positions 147 to 166 (SRSISQSSTDSYSSAASYTD) are enriched in low complexity. Phosphoserine is present on residues serine 151, serine 154, serine 157, and serine 160. Positions 238, 312, and 337 each coordinate substrate. 338–340 (SVT) serves as a coordination point for NAD(+). Positions 367 and 371 each coordinate substrate. NAD(+) contacts are provided by residues asparagine 372, 403–408 (GEVGKG), glutamate 424, asparagine 459, 480–482 (MGH), and asparagine 527.

The protein belongs to the adenosylhomocysteinase family. Homotetramer. Forms heteromultimers with AHCYL1 (via the C-terminal region). Interacts with ITPR1; with lower affinity than AHCYL1 and maybe via ITPR1. Interacts with SLC4A4. Interacts with ZCCHC4. Requires NAD(+) as cofactor. Phosphorylated during neuronal differentiation at the LISN domain. As to expression, highly expressed in cerebrum, cerebellum and kidney. Also expressed in thymus, spleen, testis, ovary and, at lower, levels in lung and liver (at protein level). In cerebellum, expressed in interneurons.

Its subcellular location is the cytoplasm. The protein resides in the microsome. It catalyses the reaction S-adenosyl-L-homocysteine + H2O = L-homocysteine + adenosine. It participates in amino-acid biosynthesis; L-homocysteine biosynthesis; L-homocysteine from S-adenosyl-L-homocysteine: step 1/1. Its function is as follows. May regulate the electrogenic sodium/bicarbonate cotransporter SLC4A4 activity and Mg(2+)-sensitivity. On the contrary of its homolog AHCYL1, does not regulate ITPR1 sensitivity to inositol 1,4,5-trisphosphate. This Mus musculus (Mouse) protein is Putative adenosylhomocysteinase 3 (Ahcyl2).